A 29-amino-acid polypeptide reads, in one-letter code: L-serine dehydratase, beta chain (29 aa).

This sequence belongs to the iron-sulfur dependent L-serine dehydratase family. In terms of assembly, heterodimer of an alpha chain and a beta chain. [4Fe-4S] cluster serves as cofactor.

It catalyses the reaction L-serine = pyruvate + NH4(+). It functions in the pathway carbohydrate biosynthesis; gluconeogenesis. The protein is L-serine dehydratase, beta chain of Anaerotignum propionicum (Clostridium propionicum).